A 314-amino-acid chain; its full sequence is DNA-directed RNA polymerase subunit alpha (314 aa).

The interval 1–228 is alpha N-terminal domain (alpha-NTD); the sequence is MIEFEKPNIH…EHLGLFMDIS (228 aa). The interval 242 to 314 is alpha C-terminal domain (alpha-CTD); the sequence is PVAASASDSA…DMNLGFRKED (73 aa).

This sequence belongs to the RNA polymerase alpha chain family. Homodimer. The RNAP catalytic core consists of 2 alpha, 1 beta, 1 beta' and 1 omega subunit. When a sigma factor is associated with the core the holoenzyme is formed, which can initiate transcription.

It catalyses the reaction RNA(n) + a ribonucleoside 5'-triphosphate = RNA(n+1) + diphosphate. Functionally, DNA-dependent RNA polymerase catalyzes the transcription of DNA into RNA using the four ribonucleoside triphosphates as substrates. This chain is DNA-directed RNA polymerase subunit alpha, found in Leuconostoc mesenteroides subsp. mesenteroides (strain ATCC 8293 / DSM 20343 / BCRC 11652 / CCM 1803 / JCM 6124 / NCDO 523 / NBRC 100496 / NCIMB 8023 / NCTC 12954 / NRRL B-1118 / 37Y).